Reading from the N-terminus, the 254-residue chain is MSNNSKIIQMCVAGQRKKGWSDEQFAHEFTVVHAEITKATAEKAPALLGYRQVLAIPRPRISAFNMNNSTWDSQAVLTWSSIEELSSLLKSEGYRANAGNHVFTEPDIVGSISQVAGEFVFDPVGYSSQESRFMVFVYIPRATRSSRELVTEQEVAQRLDNITKIGAGTGLLRYVINRDVTPSDPSQLFDGTPFTNGDWGVMGVTEQYWFKDEDTASAFFADEARVDALMKVPSSLDGKSCVAVAGQETVLVSK.

Active-site residues include His33 and Tyr50.

The catalysed reaction is a chalcone = a flavanone.. The protein operates within secondary metabolite biosynthesis; flavonoid biosynthesis. Chalcone isomerase; part of the gene cluster that mediates the biosynthesis of chlorflavonin, a fungal flavonoid with acetolactate synthase inhibitory activity. Within the pathway, cfoK acts as chalcone isomerase (CHI), the key enzyme responsible for the tricyclic formation of flavanone through Michael-type intramolecular cyclization of chalcone. The hydrogen at C2'-OH is extracted by the imidazole ring of His-33, which induces the oxa-Michael addition to form the intermediate enolate through 6-endo-trig mode cyclization. The enolate can then be stabilized by a hydrogen bond with the Tyr-50 residue. Following enol tautomerization, the C ring, a gamma-pyranone ring, is formed. The pathway begins with the PKS-NRPS hybrid synthetase cfoA that uses benzoic acid or p-hydroxybenzoic acid as a starter unit with four rounds of chain elongation using malonyl-CoA to form the chalcone skeleton. Then, a new type of chalcone isomerase, cfoK, catalyzes the conversion of the chalcone into a flavanone by a histidine-mediated oxa-Michael addition mechanism. The desaturation of flavanone to flavone is catalyzed by a new type of flavone synthase, the flavin mononucleotide (FMN)-dependent oxidoreductase cfoJ. Monooxygenases cfoF, cfoG, and P450 cfoH are responsible for the hydroxylation of the flavonoid skeleton at sites C3, C8, and C2', respectively. Like cfoF, the dehydratase cfoI plays also a role in the hydroxylation of position C3. Methyltransferases cfoB, cfoC, and cfoD then catalyze the methylation of C7-OH, C8-OH, and C3-OH, respectively. Finally, the monooxygenase cfoE is responsible for the chlorination of flavonoid at position C3'. This chain is Chalcone isomerase cfoK, found in Aspergillus candidus.